A 554-amino-acid chain; its full sequence is MCSIFGVFDIKTDAVELRKKALELSRLMRHRGPDWSGIYASDNAILAHERLSIVDVNAGAQPLYNQQKTHVLAVNGEIYNHQALRAEYGDRYQFQTGSDCEVILALYQEKGPEFLDDLQGMFAFALYDSEKDAYLIGRDHLGIIPLYMGYDEHGQLYVASEMKALVPVCRTIKEFPAGSYLWSQDGEIRSYYHRDWFDYDAVKDNVTDKNELRQALEDSVKSHLMSDVPYGVLLSGGLDSSIISAITKKYAARRVEDQERSEAWWPQLHSFAVGLPGSPDLKAAQEVANHLGTVHHEIHFTVQEGLDAIRDVIYHIETYDVTTIRASTPMYLMSRKIKAMGIKMVLSGEGSDEVFGGYLYFHKAPNAKELHEETVRKLLALHMYDCARANKAMSAWGVEARVPFLDKKFLDVAMRINPQDKMCGNGKMEKHILRECFEAYLPASVAWRQKEQFSDGVGYSWIDTLKEVAAQQVSDQQLETARFRFPYNTPTSKEAYLYREIFEELFPLPSAAECVPGGPSVACSSAKAIEWDEAFKKMDDPSGRAVGVHQSAYK.

Cys2 acts as the For GATase activity in catalysis. The region spanning 2 to 186 (CSIFGVFDIK…AGSYLWSQDG (185 aa)) is the Glutamine amidotransferase type-2 domain. Residues 50–54 (RLSIV), 75–77 (NGE), and Asp99 each bind L-glutamine. ATP contacts are provided by residues Leu233, Val273, and 347-348 (SG).

The protein belongs to the asparagine synthetase family. Homodimer.

The enzyme catalyses L-aspartate + L-glutamine + ATP + H2O = L-asparagine + L-glutamate + AMP + diphosphate + H(+). It functions in the pathway amino-acid biosynthesis; L-asparagine biosynthesis; L-asparagine from L-aspartate (L-Gln route): step 1/1. Glutamine-dependent asparagine synthesis activity can be inhibited by aspartic acid analogs (such as a sulfinate derivative and (2S,3R)-2-amino-3-methylsuccinate) in vitro; the inhibition is competitive with respect to aspartate. In terms of biological role, catalyzes the ATP-dependent conversion of aspartate into asparagine, using glutamine as a source of nitrogen. Can also use ammonia as the nitrogen source in vitro, albeit with lower efficiency. As nucleotide substrates, ATP and dATP are utilized at a similar rate in both the glutamine- and ammonia-dependent reactions, whereas GTP utilization is only 15% that of ATP, and CTP, UTP, ITP and XTP are very poor or not substrates. Also exhibits glutaminase activity. The polypeptide is Asparagine synthetase B [glutamine-hydrolyzing] (asnB) (Escherichia coli (strain K12)).